The sequence spans 429 residues: Putative protease Do-like 14 (429 aa).

A disordered region spans residues Lys-87 to Tyr-113. Positions Tyr-113 to Val-338 are serine protease. Residues His-165, Asp-203, and Ser-281 each act as charge relay system in the active site. Residues Ile-318 to Glu-424 form the PDZ domain.

This sequence belongs to the peptidase S1C family.

Functionally, putative serine protease. The protein is Putative protease Do-like 14 (DEGP14) of Arabidopsis thaliana (Mouse-ear cress).